The following is a 249-amino-acid chain: Phosphonates import ATP-binding protein PhnC (249 aa).

The ABC transporter domain maps to 2-246; the sequence is IEFKKVEKVW…KLNESKLEEI (245 aa). 35–42 is a binding site for ATP; that stretch reads GLSGAGKT.

The protein belongs to the ABC transporter superfamily. Phosphonates importer (TC 3.A.1.9.1) family. The complex is composed of two ATP-binding proteins (PhnC), two transmembrane proteins (PhnE) and a solute-binding protein (PhnD).

It localises to the cell membrane. The enzyme catalyses phosphonate(out) + ATP + H2O = phosphonate(in) + ADP + phosphate + H(+). Functionally, part of the ABC transporter complex PhnCDE involved in phosphonates import. Responsible for energy coupling to the transport system. The polypeptide is Phosphonates import ATP-binding protein PhnC (Mesoplasma florum (strain ATCC 33453 / NBRC 100688 / NCTC 11704 / L1) (Acholeplasma florum)).